A 143-amino-acid polypeptide reads, in one-letter code: Transcriptional regulator MraZ (143 aa).

SpoVT-AbrB domains are found at residues 5–47 (TYTP…PRSE) and 76–119 (TDEQ…DAQA).

This sequence belongs to the MraZ family. Forms oligomers.

It is found in the cytoplasm. The protein resides in the nucleoid. This is Transcriptional regulator MraZ from Mycobacterium ulcerans (strain Agy99).